The chain runs to 234 residues: Carboxy-S-adenosyl-L-methionine synthase (234 aa).

Residues tyrosine 35, 60–62 (GCS), 83–84 (DN), 109–110 (DI), asparagine 124, and arginine 191 contribute to the S-adenosyl-L-methionine site.

The protein belongs to the class I-like SAM-binding methyltransferase superfamily. Cx-SAM synthase family. As to quaternary structure, homodimer.

The catalysed reaction is prephenate + S-adenosyl-L-methionine = carboxy-S-adenosyl-L-methionine + 3-phenylpyruvate + H2O. Its function is as follows. Catalyzes the conversion of S-adenosyl-L-methionine (SAM) to carboxy-S-adenosyl-L-methionine (Cx-SAM). This Campylobacter hominis (strain ATCC BAA-381 / DSM 21671 / CCUG 45161 / LMG 19568 / NCTC 13146 / CH001A) protein is Carboxy-S-adenosyl-L-methionine synthase.